The sequence spans 420 residues: Protein disulfide isomerase Creld1 (420 aa).

The signal sequence occupies residues 1–29 (MAPLPPRGLVPSLLWCLSLFLSLPGPVWL). Over 30-362 (QPSPPPHPSP…GFFAEMTEDE (333 aa)) the chain is Extracellular. Residues 46-49 (CHTC) carry the CXXC motif. 4 disulfide bridges follow: cysteine 46-cysteine 49, cysteine 155-cysteine 169, cysteine 163-cysteine 181, and cysteine 183-cysteine 192. Residues 153–193 (LPCPGGTERPCGGYGQCEGEGTRGGSGHCDCQAGYGGEACG) form the EGF-like 1 domain. An N-linked (GlcNAc...) asparagine glycan is attached at asparagine 205. 2 FU repeats span residues 208–255 (HLVC…EQAT) and 268–315 (SYEC…VVCP). The short motif at 278–281 (CLGC) is the CXXC element. 4 cysteine pairs are disulfide-bonded: cysteine 278-cysteine 281, cysteine 309-cysteine 321, cysteine 314-cysteine 330, and cysteine 332-cysteine 343. Residues 305 to 342 (DVDECETVVCPGENEKCENTEGGYRCVCAEGYRQEDGI) enclose the EGF-like 2; calcium-binding domain. The helical transmembrane segment at 363-383 (MVVLQQMFFGVIICALATLAA) threads the bilayer. A topological domain (cytoplasmic) is located at residue lysine 384. A helical transmembrane segment spans residues 385–405 (GDLVFTAIFIGAVAAMTGYWL). At 406–420 (SERSDRVLEGFIKGR) the chain is on the extracellular side.

Belongs to the CRELD family. In terms of tissue distribution, expressed in myoblast C2C12 cells (at protein level).

It localises to the membrane. The enzyme catalyses Catalyzes the rearrangement of -S-S- bonds in proteins.. Functionally, protein disulfide isomerase. Promotes the localization of acetylcholine receptors (AChRs) to the plasma membrane. This Mus musculus (Mouse) protein is Protein disulfide isomerase Creld1 (Creld1).